Reading from the N-terminus, the 344-residue chain is 4-dimethylallyltryptophan N-methyltransferase easF (344 aa).

This sequence belongs to the methyltransferase superfamily. In terms of assembly, homodimer.

It carries out the reaction 4-(3-methylbut-2-enyl)-L-tryptophan + S-adenosyl-L-methionine = 4-(3-methylbut-2-enyl)-L-abrine + S-adenosyl-L-homocysteine + H(+). Its pathway is alkaloid biosynthesis; ergot alkaloid biosynthesis. Its function is as follows. 4-dimethylallyltryptophan N-methyltransferase; part of the gene cluster that mediates the biosynthesis of fungal ergot alkaloid ergovaline, the predominant ergopeptine product in E.festucae var. lolii. DmaW catalyzes the first step of ergot alkaloid biosynthesis by condensing dimethylallyl diphosphate (DMAP) and tryptophan to form 4-dimethylallyl-L-tryptophan. The second step is catalyzed by the methyltransferase easF that methylates 4-dimethylallyl-L-tryptophan in the presence of S-adenosyl-L-methionine, resulting in the formation of 4-dimethylallyl-L-abrine. The catalase easC and the FAD-dependent oxidoreductase easE then transform 4-dimethylallyl-L-abrine to chanoclavine-I which is further oxidized by easD in the presence of NAD(+), resulting in the formation of chanoclavine-I aldehyde. Agroclavine dehydrogenase easG then mediates the conversion of chanoclavine-I aldehyde to agroclavine via a non-enzymatic adduct reaction: the substrate is an iminium intermediate that is formed spontaneously from chanoclavine-I aldehyde in the presence of glutathione. The presence of easA is not required to complete this reaction. Further conversion of agroclavine to paspalic acid is a two-step process involving oxidation of agroclavine to elymoclavine and of elymoclavine to paspalic acid, the second step being performed by the elymoclavine oxidase cloA. Paspalic acid is then further converted to D-lysergic acid. Ergovaline is assembled from D-lysergic acid and three different amino acids by the D-lysergyl-peptide-synthetase composed of a monomudular (lpsB) and a trimodular (lpsA) nonribosomal peptide synthetase subunit. This chain is 4-dimethylallyltryptophan N-methyltransferase easF, found in Epichloe festucae var. lolii (Neotyphodium lolii).